Reading from the N-terminus, the 517-residue chain is Crotonobetaine/carnitine--CoA ligase (517 aa).

Belongs to the ATP-dependent AMP-binding enzyme family.

It catalyses the reaction 4-(trimethylamino)butanoate + ATP + CoA = 4-(trimethylamino)butanoyl-CoA + AMP + diphosphate. The enzyme catalyses crotonobetaine + ATP + CoA = crotonobetainyl-CoA + AMP + diphosphate. It carries out the reaction (R)-carnitine + ATP + CoA = (R)-carnitinyl-CoA + AMP + diphosphate. The protein operates within amine and polyamine metabolism; carnitine metabolism. Its function is as follows. Catalyzes the transfer of CoA to carnitine, generating the initial carnitinyl-CoA needed for the CaiB reaction cycle. Also has activity toward crotonobetaine and gamma-butyrobetaine. In Escherichia coli O6:K15:H31 (strain 536 / UPEC), this protein is Crotonobetaine/carnitine--CoA ligase.